Consider the following 124-residue polypeptide: Small ribosomal subunit protein uS12 (124 aa).

A disordered region spans residues 1-20 (MPTIQQLVRKGRTPKVVKTK). Residues 9–18 (RKGRTPKVVK) show a composition bias toward basic residues. Position 89 is a 3-methylthioaspartic acid (Asp-89).

Belongs to the universal ribosomal protein uS12 family. As to quaternary structure, part of the 30S ribosomal subunit. Contacts proteins S8 and S17. May interact with IF1 in the 30S initiation complex.

In terms of biological role, with S4 and S5 plays an important role in translational accuracy. Interacts with and stabilizes bases of the 16S rRNA that are involved in tRNA selection in the A site and with the mRNA backbone. Located at the interface of the 30S and 50S subunits, it traverses the body of the 30S subunit contacting proteins on the other side and probably holding the rRNA structure together. The combined cluster of proteins S8, S12 and S17 appears to hold together the shoulder and platform of the 30S subunit. The polypeptide is Small ribosomal subunit protein uS12 (Clavibacter michiganensis subsp. michiganensis (strain NCPPB 382)).